The primary structure comprises 158 residues: NAD(P)H-quinone oxidoreductase subunit N (158 aa).

This sequence belongs to the complex I NdhN subunit family. NDH-1 can be composed of about 15 different subunits; different subcomplexes with different compositions have been identified which probably have different functions.

It localises to the cellular thylakoid membrane. It catalyses the reaction a plastoquinone + NADH + (n+1) H(+)(in) = a plastoquinol + NAD(+) + n H(+)(out). The catalysed reaction is a plastoquinone + NADPH + (n+1) H(+)(in) = a plastoquinol + NADP(+) + n H(+)(out). Its function is as follows. NDH-1 shuttles electrons from an unknown electron donor, via FMN and iron-sulfur (Fe-S) centers, to quinones in the respiratory and/or the photosynthetic chain. The immediate electron acceptor for the enzyme in this species is believed to be plastoquinone. Couples the redox reaction to proton translocation, and thus conserves the redox energy in a proton gradient. Cyanobacterial NDH-1 also plays a role in inorganic carbon-concentration. The chain is NAD(P)H-quinone oxidoreductase subunit N from Synechococcus elongatus (strain ATCC 33912 / PCC 7942 / FACHB-805) (Anacystis nidulans R2).